Consider the following 151-residue polypeptide: MMENTRIRVGAEAFSVGDEYTWLSQCDEDGAVVTFTGKVRNHNLGASVSALTLEHYPGMTEKALTEIIADARSRWSLQRVSVIHRVGPLFPGDEIVFVGVTSAHRSMAFEAAEFIMDYLKTRAPFWKREATVEGERWVESRDSDHIAAKRW.

Substrate contacts are provided by residues 38–40, 104–105, Lys-120, and 127–129; these read KVR, HR, and KRE.

The protein belongs to the MoaE family. In terms of assembly, heterotetramer of 2 MoaD subunits and 2 MoaE subunits. Also stable as homodimer. The enzyme changes between these two forms during catalysis.

The catalysed reaction is 2 [molybdopterin-synthase sulfur-carrier protein]-C-terminal-Gly-aminoethanethioate + cyclic pyranopterin phosphate + H2O = molybdopterin + 2 [molybdopterin-synthase sulfur-carrier protein]-C-terminal Gly-Gly + 2 H(+). The protein operates within cofactor biosynthesis; molybdopterin biosynthesis. Converts molybdopterin precursor Z into molybdopterin. This requires the incorporation of two sulfur atoms into precursor Z to generate a dithiolene group. The sulfur is provided by MoaD. This chain is Molybdopterin synthase catalytic subunit (moaE), found in Yersinia pestis.